Reading from the N-terminus, the 336-residue chain is Phospho-N-acetylmuramoyl-pentapeptide-transferase (336 aa).

10 helical membrane-spanning segments follow: residues 3-23 (LTLI…PYFI), 53-73 (GGTV…LFSI), 78-98 (SLAL…IGFL), 118-138 (LALQ…PSGI), 143-163 (VFGY…FWVV), 174-194 (GIDG…GVIA), 200-220 (FDVL…FCFN), 226-246 (VFMG…ISIA), 254-274 (LIIG…VFYF), and 316-336 (AFLW…LYVF).

The protein belongs to the glycosyltransferase 4 family. MraY subfamily. The cofactor is Mg(2+).

It is found in the cell membrane. It carries out the reaction UDP-N-acetyl-alpha-D-muramoyl-L-alanyl-gamma-D-glutamyl-L-lysyl-D-alanyl-D-alanine + di-trans,octa-cis-undecaprenyl phosphate = Mur2Ac(oyl-L-Ala-gamma-D-Glu-L-Lys-D-Ala-D-Ala)-di-trans,octa-cis-undecaprenyl diphosphate + UMP. Its pathway is cell wall biogenesis; peptidoglycan biosynthesis. Functionally, catalyzes the initial step of the lipid cycle reactions in the biosynthesis of the cell wall peptidoglycan: transfers peptidoglycan precursor phospho-MurNAc-pentapeptide from UDP-MurNAc-pentapeptide onto the lipid carrier undecaprenyl phosphate, yielding undecaprenyl-pyrophosphoryl-MurNAc-pentapeptide, known as lipid I. The protein is Phospho-N-acetylmuramoyl-pentapeptide-transferase of Streptococcus pyogenes serotype M18 (strain MGAS8232).